Here is a 2898-residue protein sequence, read N- to C-terminus: Pericentrin (2898 aa).

The segment at 1-117 is disordered; it reads MEDEQEQRRR…QPPPPQTAHS (117 aa). A compositionally biased stretch (basic residues) spans 34–44; sequence SKKKTAKRKGS. A Phosphoserine modification is found at serine 44. Coiled-coil stretches lie at residues 127-343 and 382-434; these read LNNM…IRLL and AQQQ…DSLE. Residues 429 to 460 form a disordered region; it reads REDSLESTEISSSCVLPEETSGREGKEPPDPL. Positions 448–457 are enriched in basic and acidic residues; that stretch reads TSGREGKEPP. Coiled coils occupy residues 468 to 527, 611 to 696, 727 to 787, and 872 to 939; these read KVQE…LREK, CALQ…LETH, VADV…SLRM, and SQDQ…LRRL. Serine 1022 is subject to Phosphoserine. 3 coiled-coil regions span residues 1069–1383, 1429–1482, and 1529–1593; these read EREF…QENM, NEVV…SLMG, and QLLA…AKEA. Position 1437 is a phosphoserine (serine 1437). Disordered regions lie at residues 1745-1786, 1815-1880, and 1958-1979; these read VASR…DDVL, TQEK…PLTP, and TSPS…GPDI. Polar residues-rich tracts occupy residues 1747–1766 and 1817–1834; these read SRDT…SENG and EKLT…SGHS. The tract at residues 1801–1822 is interaction with CDK5RAP2; the sequence is NQDLLVQVEMPDFPTQEKLTSQ. A phosphoserine mark is found at serine 1828, serine 1859, serine 1860, and serine 1959. Basic and acidic residues predominate over residues 1963–1976; sequence ELARRSDGSRKSDG. The residue at position 1987 (serine 1987) is a Phosphoserine. Over residues 2046–2055 the composition is skewed to polar residues; that stretch reads SESQDPSSAL. The disordered stretch occupies residues 2046–2088; sequence SESQDPSSALNKGEPRDPLDGFPRDSQALSEVTTDKGEKESLE. Basic and acidic residues-rich tracts occupy residues 2058–2068 and 2078–2088; these read GEPRDPLDGFP and TTDKGEKESLE. Serine 2128 is modified (phosphoserine). Coiled coils occupy residues 2211-2403 and 2429-2590; these read KVEQ…EALQ and HALL…ELSM. Disordered regions lie at residues 2509 to 2532 and 2653 to 2684; these read VSGG…QFQE and NRQS…QTTS. The segment at 2545 to 2810 is interaction with NEK2; the sequence is LCAAGLLTSF…SQRQRSPSGP (266 aa). Residues 2653–2671 show a composition bias toward polar residues; that stretch reads NRQSKSSLKQDGTDLQSSL. Residues 2758–2771 are calmodulin-binding; it reads KFRTAVRVVIAVLR. The disordered stretch occupies residues 2787–2898; the sequence is ALVHPKSTRH…QKSCHQKIKQ (112 aa). Over residues 2792–2802 the composition is skewed to basic residues; sequence KSTRHGHRTSQ. Residues 2845-2860 are compositionally biased toward polar residues; the sequence is TSTPSSRLERSLTASQ. Positions 2861-2874 are enriched in basic and acidic residues; that stretch reads DPEHSLTEYIHHLE. Serine 2865 bears the Phosphoserine mark.

In terms of assembly, interacts with DISC1 and PCM1. Binds calmodulin. Interacts with CEP131. Interacts with CDK5RAP2; the interaction is leading to centrosomal localization of PCNT and CDK5RAP2. Interacts with CHD3. Interacts with CHD4; the interaction regulates centrosome integrity. Interacts with NEK2. Interacts with CCDC13. Interacts with CEP68. Interacts with ATF5; the ATF5:PCNT:polyglutamylated tubulin (PGT) tripartite unites the mother centriole and the pericentriolar material (PCM) in the centrosome. Post-translationally, cleaved during mitotis which leads to removal of CDK5RAP2 from the centrosome and promotes centriole disengagement and subsequent centriole separation. The C-terminal fragment is rapidly degraded following cleavage. In terms of processing, ubiquitinated by TRIM43; leading to proteasomal degradation. In terms of tissue distribution, expressed in heart and lung (at protein level). Expressed in kidney, thymus, liver, brain, muscle, testis, spleen, lung and heart.

It localises to the cytoplasm. The protein localises to the cytoskeleton. Its subcellular location is the microtubule organizing center. It is found in the centrosome. In terms of biological role, integral component of the filamentous matrix of the centrosome involved in the initial establishment of organized microtubule arrays in both mitosis and meiosis. Plays a role, together with DISC1, in the microtubule network formation. Is an integral component of the pericentriolar material (PCM). May play an important role in preventing premature centrosome splitting during interphase by inhibiting NEK2 kinase activity at the centrosome. This is Pericentrin (Pcnt) from Mus musculus (Mouse).